A 360-amino-acid chain; its full sequence is DNA replication and repair protein RecF (360 aa).

Residue 30 to 37 participates in ATP binding; sequence GQNGSGKT.

It belongs to the RecF family.

It is found in the cytoplasm. Its function is as follows. The RecF protein is involved in DNA metabolism; it is required for DNA replication and normal SOS inducibility. RecF binds preferentially to single-stranded, linear DNA. It also seems to bind ATP. The protein is DNA replication and repair protein RecF of Shewanella oneidensis (strain ATCC 700550 / JCM 31522 / CIP 106686 / LMG 19005 / NCIMB 14063 / MR-1).